Here is a 375-residue protein sequence, read N- to C-terminus: Alcohol dehydrogenase 1 (375 aa).

Residue Ala-1 is modified to N-acetylalanine. The Zn(2+) site is built by Cys-46, His-68, Cys-98, Cys-101, Cys-104, Cys-112, and Cys-175. Residues 200 to 205 (GLGGVG), Asp-224, Lys-229, 293 to 295 (VGV), and Arg-370 each bind NAD(+).

Belongs to the zinc-containing alcohol dehydrogenase family. Class-I subfamily. As to quaternary structure, homodimer. The cofactor is Zn(2+).

The protein resides in the cytoplasm. It carries out the reaction a primary alcohol + NAD(+) = an aldehyde + NADH + H(+). The enzyme catalyses a secondary alcohol + NAD(+) = a ketone + NADH + H(+). In Columba livia (Rock dove), this protein is Alcohol dehydrogenase 1.